The sequence spans 241 residues: 1-(5-phosphoribosyl)-5-[(5-phosphoribosylamino)methylideneamino] imidazole-4-carboxamide isomerase (241 aa).

Aspartate 10 (proton acceptor) is an active-site residue. Aspartate 131 (proton donor) is an active-site residue.

Belongs to the HisA/HisF family.

It localises to the cytoplasm. It carries out the reaction 1-(5-phospho-beta-D-ribosyl)-5-[(5-phospho-beta-D-ribosylamino)methylideneamino]imidazole-4-carboxamide = 5-[(5-phospho-1-deoxy-D-ribulos-1-ylimino)methylamino]-1-(5-phospho-beta-D-ribosyl)imidazole-4-carboxamide. It participates in amino-acid biosynthesis; L-histidine biosynthesis; L-histidine from 5-phospho-alpha-D-ribose 1-diphosphate: step 4/9. This chain is 1-(5-phosphoribosyl)-5-[(5-phosphoribosylamino)methylideneamino] imidazole-4-carboxamide isomerase, found in Hyphomonas neptunium (strain ATCC 15444).